Here is a 422-residue protein sequence, read N- to C-terminus: Serine--tRNA ligase (422 aa).

An L-serine-binding site is contributed by 229 to 231 (TAE). 260 to 262 (RAE) provides a ligand contact to ATP. L-serine is bound at residue Glu-283. An ATP-binding site is contributed by 347-350 (EISS). Residue Ser-383 participates in L-serine binding.

Belongs to the class-II aminoacyl-tRNA synthetase family. Type-1 seryl-tRNA synthetase subfamily. Homodimer. The tRNA molecule binds across the dimer.

It localises to the cytoplasm. It carries out the reaction tRNA(Ser) + L-serine + ATP = L-seryl-tRNA(Ser) + AMP + diphosphate + H(+). It catalyses the reaction tRNA(Sec) + L-serine + ATP = L-seryl-tRNA(Sec) + AMP + diphosphate + H(+). It participates in aminoacyl-tRNA biosynthesis; selenocysteinyl-tRNA(Sec) biosynthesis; L-seryl-tRNA(Sec) from L-serine and tRNA(Sec): step 1/1. Its function is as follows. Catalyzes the attachment of serine to tRNA(Ser). Is also able to aminoacylate tRNA(Sec) with serine, to form the misacylated tRNA L-seryl-tRNA(Sec), which will be further converted into selenocysteinyl-tRNA(Sec). The chain is Serine--tRNA ligase from Heliobacterium modesticaldum (strain ATCC 51547 / Ice1).